Here is a 235-residue protein sequence, read N- to C-terminus: 2-C-methyl-D-erythritol 4-phosphate cytidylyltransferase (235 aa).

The protein belongs to the IspD/TarI cytidylyltransferase family. IspD subfamily.

It catalyses the reaction 2-C-methyl-D-erythritol 4-phosphate + CTP + H(+) = 4-CDP-2-C-methyl-D-erythritol + diphosphate. It participates in isoprenoid biosynthesis; isopentenyl diphosphate biosynthesis via DXP pathway; isopentenyl diphosphate from 1-deoxy-D-xylulose 5-phosphate: step 2/6. Its function is as follows. Catalyzes the formation of 4-diphosphocytidyl-2-C-methyl-D-erythritol from CTP and 2-C-methyl-D-erythritol 4-phosphate (MEP). This Pseudomonas putida (strain GB-1) protein is 2-C-methyl-D-erythritol 4-phosphate cytidylyltransferase.